The following is a 558-amino-acid chain: Phosphatidylserine lipase ABHD16A (558 aa).

2 consecutive transmembrane segments (helical) span residues 60–80 (ILALASVFWSISYYSSPFAFF) and 93–113 (VVPFSHYAGTLLLLLAGVACL). Topologically, residues 114 to 558 (RGIGRWTNPQ…AQNFQMPWHL (445 aa)) are cytoplasmic. The AB hydrolase-1 domain occupies 281-407 (LVICCEGNAG…LVTRTVRQHL (127 aa)). Catalysis depends on charge relay system residues S355, D430, and H507.

Belongs to the AB hydrolase superfamily. ABHD16 family.

It localises to the membrane. The enzyme catalyses 1-heptadecanoyl-2-(5Z,8Z,11Z,14Z-eicosatetraenoyl)-sn-glycero-3-phosphoserine + H2O = 1-heptadecanoyl-sn-glycero-3-phosphoserine + (5Z,8Z,11Z,14Z)-eicosatetraenoate + H(+). It carries out the reaction 1-hexadecanoyl-2-(9Z-octadecenoyl)-sn-glycero-3-phospho-L-serine + H2O = 1-hexadecanoyl-sn-glycero-3-phospho-L-serine + (9Z)-octadecenoate + H(+). It catalyses the reaction 1-octadecanoyl-2-(9Z,12Z-octadecadienoyl)-sn-glycero-3-phosphoserine + H2O = 1-octadecanoyl-sn-glycero-3-phosphoserine + (9Z,12Z)-octadecadienoate + H(+). The catalysed reaction is 1-heptadecanoyl-2-(5Z,8Z,11Z,14Z-eicosatetraenoyl)-sn-glycero-3-phosphocholine + H2O = 1-heptadecanoyl-sn-glycero-3-phosphocholine + (5Z,8Z,11Z,14Z)-eicosatetraenoate + H(+). The enzyme catalyses 1-hexadecanoyl-2-(9Z-octadecenoyl)-sn-glycero-3-phosphoglycerol + H2O = 1-hexadecanoyl-sn-glycero-3-phosphoglycerol + (9Z)-octadecenoate + H(+). It carries out the reaction 1-hexadecanoyl-2-(9Z-octadecenoyl)-sn-glycero-3-phospho-(1D-myo-inositol) + H2O = 1-hexadecanoyl-sn-glycero-3-phospho-(1D-myo-inositol) + (9Z)-octadecenoate + H(+). It catalyses the reaction 1-heptadecanoyl-2-(5Z,8Z,11Z,14Z-eicosatetraenoyl)-sn-glycero-3-phosphoethanolamine + H2O = 1-heptadecanoyl-sn-glycero-3-phosphoethanolamine + (5Z,8Z,11Z,14Z)-eicosatetraenoate + H(+). The catalysed reaction is 1-hexadecanoyl-2-(9Z-octadecenoyl)-sn-glycero-3-phospho-(1'-sn-glycerol) + H2O = 1-hexadecanoyl-sn-glycero-3-phospho-(1'-sn-glycerol) + (9Z)-octadecenoate + H(+). The enzyme catalyses Hydrolyzes glycerol monoesters of long-chain fatty acids.. It carries out the reaction 1-tetradecanoylglycerol + H2O = tetradecanoate + glycerol + H(+). It catalyses the reaction 2-hexadecanoylglycerol + H2O = glycerol + hexadecanoate + H(+). The catalysed reaction is 1-(9Z-octadecenoyl)-glycerol + H2O = glycerol + (9Z)-octadecenoate + H(+). The enzyme catalyses 2-(9Z-octadecenoyl)-glycerol + H2O = glycerol + (9Z)-octadecenoate + H(+). It carries out the reaction 2-(9Z,12Z-octadecadienoyl)-glycerol + H2O = (9Z,12Z)-octadecadienoate + glycerol + H(+). It catalyses the reaction 1-(5Z,8Z,11Z,14Z-eicosatetraenoyl)-glycerol + H2O = glycerol + (5Z,8Z,11Z,14Z)-eicosatetraenoate + H(+). The catalysed reaction is 2-(5Z,8Z,11Z,14Z-eicosatetraenoyl)-glycerol + H2O = glycerol + (5Z,8Z,11Z,14Z)-eicosatetraenoate + H(+). The enzyme catalyses prostaglandin D2-1-glycerol ester + H2O = prostaglandin D2 + glycerol + H(+). It carries out the reaction 2-glyceryl-15-deoxy-Delta(12,14)-prostaglandin J2 + H2O = 15-deoxy-Delta(12,14)-prostaglandin J2 + glycerol + H(+). It catalyses the reaction 1-(9Z,12Z-octadecadienoyl)-glycerol + H2O = (9Z,12Z)-octadecadienoate + glycerol + H(+). Its activity is regulated as follows. Inhibited by beta-lactone-based lipid inhibitors, such as beta-lactone palmostatin-B. Phosphatidylserine (PS) lipase that mediates the hydrolysis of phosphatidylserine to generate lysophosphatidylserine (LPS). LPS constitutes a class of signaling lipids that regulates immunological and neurological processes. Has no activity towards diacylglycerol, triacylglycerol or lysophosphatidylserine lipase. Also has monoacylglycerol lipase activity, with preference for 1-(9Z,12Z-octadecadienoyl)-glycerol (1-LG) and 2-glyceryl-15-deoxy-Delta(12,14)-prostaglandin J2 (15d-PGJ(2)-G). The protein is Phosphatidylserine lipase ABHD16A of Homo sapiens (Human).